Reading from the N-terminus, the 931-residue chain is Beta-mannosidase A (931 aa).

A signal peptide spans 1–21 (MRHSIGLAAALLAPTLPVALG). N-linked (GlcNAc...) asparagine glycosylation is found at Asn-40, Asn-79, Asn-247, Asn-282, and Asn-347. Glu-479 acts as the Proton donor in catalysis. Residues Asn-550, Asn-608, Asn-658, Asn-738, Asn-790, Asn-798, Asn-830, and Asn-918 are each glycosylated (N-linked (GlcNAc...) asparagine).

It belongs to the glycosyl hydrolase 2 family. Beta-mannosidase A subfamily. As to quaternary structure, homodimer. N-glycosylated.

The protein resides in the secreted. It catalyses the reaction Hydrolysis of terminal, non-reducing beta-D-mannose residues in beta-D-mannosides.. Its pathway is glycan metabolism; N-glycan degradation. Its function is as follows. Exoglycosidase that cleaves the single beta-linked mannose residue from the non-reducing end of beta-mannosidic oligosaccharides of various complexity and length. Involved in the degradation of polymeric mannan and galactomannan. Releases the terminal mannose residue from mannobiose and mannotriose, as well as from galactosyl-mannobiose (GM2), galactosyl-mannotriose (GM3) and di-galactosyl-mannopentaose (G2M5). The sequence is that of Beta-mannosidase A (mndA) from Aspergillus niger.